Here is a 57-residue protein sequence, read N- to C-terminus: DNA gyrase inhibitor YacG (57 aa).

Zn(2+) is bound by residues Cys10, Cys13, Cys25, and Cys29.

This sequence belongs to the DNA gyrase inhibitor YacG family. Interacts with GyrB. Zn(2+) is required as a cofactor.

Its function is as follows. Inhibits all the catalytic activities of DNA gyrase by preventing its interaction with DNA. Acts by binding directly to the C-terminal domain of GyrB, which probably disrupts DNA binding by the gyrase. This is DNA gyrase inhibitor YacG from Brucella melitensis biotype 1 (strain ATCC 23456 / CCUG 17765 / NCTC 10094 / 16M).